The sequence spans 536 residues: Chaperonin GroEL (536 aa).

Residues 30–33, 86–90, Gly-414, and Asp-494 contribute to the ATP site; these read TLGP and DGTTT.

This sequence belongs to the chaperonin (HSP60) family. Forms a cylinder of 14 subunits composed of two heptameric rings stacked back-to-back. Interacts with the co-chaperonin GroES.

The protein resides in the cytoplasm. The catalysed reaction is ATP + H2O + a folded polypeptide = ADP + phosphate + an unfolded polypeptide.. Together with its co-chaperonin GroES, plays an essential role in assisting protein folding. The GroEL-GroES system forms a nano-cage that allows encapsulation of the non-native substrate proteins and provides a physical environment optimized to promote and accelerate protein folding. In Methanospirillum hungatei JF-1 (strain ATCC 27890 / DSM 864 / NBRC 100397 / JF-1), this protein is Chaperonin GroEL.